Here is a 1509-residue protein sequence, read N- to C-terminus: ABC transporter G family member 38 (1509 aa).

In terms of domain architecture, ABC transporter 1 spans 196–467; sequence LGLVGLNFAK…FERCGFRCPE (272 aa). 229–236 lines the ATP pocket; sequence GPPSSGKT. Positions 545–758 constitute an ABC transmembrane type-2 1 domain; the sequence is ELLKTSCSKE…AYIAFSSNEM (214 aa). A run of 7 helical transmembrane segments spans residues 563–583, 598–618, 651–671, 682–702, 707–727, 733–753, and 791–811; these read FVYI…STVF, IYIG…FADL, IPSS…TMGF, LLVV…TAGL, VVTN…GGFI, IPKW…YIAF, and YWIA…LFSL. Residues 908 to 1160 enclose the ABC transporter 2 domain; it reads MSFNEINYYV…KVVEYFEAIP (253 aa). 953–960 is an ATP binding site; the sequence is GVSGAGKT. Residues 1233–1447 enclose the ABC transmembrane type-2 2 domain; the sequence is NQFKLCLWKQ…TVYGLIVSQY (215 aa). 7 helical membrane passes run 1252-1272, 1284-1304, 1336-1356, 1367-1387, 1397-1417, 1425-1445, and 1478-1498; these read YNLV…TIFW, LLVI…ENSV, VVVE…IVYP, FFWF…YGMM, VASI…GFFI, WWVW…LIVS, and FMGV…FTYA.

This sequence belongs to the ABC transporter superfamily. ABCG family. PDR (TC 3.A.1.205) subfamily.

The protein resides in the membrane. Its function is as follows. May be a general defense protein. This Oryza sativa subsp. japonica (Rice) protein is ABC transporter G family member 38.